We begin with the raw amino-acid sequence, 284 residues long: L-ribulose-5-phosphate 3-epimerase UlaE (284 aa).

The protein belongs to the L-ribulose-5-phosphate 3-epimerase family.

The enzyme catalyses L-ribulose 5-phosphate = L-xylulose 5-phosphate. The protein operates within cofactor degradation; L-ascorbate degradation; D-xylulose 5-phosphate from L-ascorbate: step 3/4. In terms of biological role, catalyzes the isomerization of L-xylulose-5-phosphate to L-ribulose-5-phosphate. Is involved in the anaerobic L-ascorbate utilization. The protein is L-ribulose-5-phosphate 3-epimerase UlaE of Salmonella typhi.